We begin with the raw amino-acid sequence, 642 residues long: Polyglycine hydrolase (642 aa).

An N-terminal signal peptide occupies residues 1-23 (MYTSRLLLSNLASCLSLATLVAS). Asparagine 37, asparagine 100, asparagine 159, and asparagine 341 each carry an N-linked (GlcNAc...) asparagine glycan. Cysteine 149 and cysteine 183 are oxidised to a cystine. The active site involves serine 370. Residues asparagine 390, asparagine 407, asparagine 444, asparagine 487, and asparagine 494 are each glycosylated (N-linked (GlcNAc...) asparagine).

This sequence belongs to the peptidase S12 family.

The protein localises to the secreted. The enzyme catalyses a glycyl-glycyl-[protein] + H2O = N-terminal glycyl-[protein] + [protein]-C-terminal glycine. With respect to regulation, not inhibited by phenylmethylsulfonyl fluoride (PMSF; serine peptidase class S1 inhibitor), clavulanic acid (beta-lactamase inhibitor) or ampicillin (penicillin-binding protein (PBP) inhibitor). Its function is as follows. Serine-type endopeptidase that cleaves Gly-Gly bonds in the polyglycine linker of host plant class IV chitinases to disrupt their chitin-binding, and thereby plays a role in lowering the defense responses of the host to the fungus. Degrades Z.mays Endochitinase A (CHIA). Degrades Z.mays Endochitinase B (CHIB). Has no activity on Z.mays CHIA following CHIA cleavage by fungalysin. This is Polyglycine hydrolase from Epicoccum sorghinum (Endophyte fungus).